The sequence spans 115 residues: NADH-ubiquinone oxidoreductase chain 3 (115 aa).

3 consecutive transmembrane segments (helical) span residues 4 to 24 (LVAL…AFWL), 55 to 75 (FFLV…LLPL), and 87 to 107 (MMLT…YEWM).

The protein belongs to the complex I subunit 3 family. As to quaternary structure, core subunit of respiratory chain NADH dehydrogenase (Complex I) which is composed of 45 different subunits. Interacts with TMEM186. Interacts with TMEM242.

It localises to the mitochondrion inner membrane. It catalyses the reaction a ubiquinone + NADH + 5 H(+)(in) = a ubiquinol + NAD(+) + 4 H(+)(out). Functionally, core subunit of the mitochondrial membrane respiratory chain NADH dehydrogenase (Complex I) which catalyzes electron transfer from NADH through the respiratory chain, using ubiquinone as an electron acceptor. Essential for the catalytic activity of complex I. This Habromys lophurus (Crested-tailed deer mouse) protein is NADH-ubiquinone oxidoreductase chain 3.